The primary structure comprises 285 residues: Glutamate racemase (285 aa).

Substrate contacts are provided by residues 30–31 (DS) and 62–63 (YG). Residue Cys94 is the Proton donor/acceptor of the active site. 95–96 (NT) is a binding site for substrate. Cys206 (proton donor/acceptor) is an active-site residue. 207-208 (TH) is a binding site for substrate.

The protein belongs to the aspartate/glutamate racemases family.

The enzyme catalyses L-glutamate = D-glutamate. It participates in cell wall biogenesis; peptidoglycan biosynthesis. Provides the (R)-glutamate required for cell wall biosynthesis. The chain is Glutamate racemase from Pectobacterium atrosepticum (strain SCRI 1043 / ATCC BAA-672) (Erwinia carotovora subsp. atroseptica).